The following is a 291-amino-acid chain: Syntaxin-1A homolog (291 aa).

Positions 1 to 24 (MTKDRLSALKAAQSEDEQDDDMHM) are disordered. Residues 1–266 (MTKDRLSALK…QYQSKARRKK (266 aa)) are Cytoplasmic-facing. Residues 69-95 (NDQKTKEELDELMAVIKRAANKVRGKL) adopt a coiled-coil conformation. The t-SNARE coiled-coil homology domain maps to 193 to 255 (LADIEARHND…DRAVADTKKA (63 aa)). Residues 267-287 (ICILVTGVILITGLIIFILFY) form a helical; Anchor for type IV membrane protein membrane-spanning segment. The Extracellular portion of the chain corresponds to 288-291 (AKVL).

This sequence belongs to the syntaxin family. Interacts (via N-terminus, in open or in closed conformation) with unc-18; the interaction is direct. Interaction in open conformation with unc-18 promotes synaptic vesicle docking and tethering. Interaction via N-terminus with unc-18 mediates the secretion of the neurotransmitter acetylcholine from cholinergic motor neurons. Interaction with unc-18 is reduced in the presence of unc-13. Expressed throughout the head ganglion, nerve ring, ventral cord, dorsal cord, intestine, vulva and spermatheca.

It localises to the cell membrane. It is found in the cell projection. The protein localises to the axon. The protein resides in the dendrite. Its subcellular location is the perikaryon. Functionally, plays a critical role in several secretory processes, including cuticle secretion and neurotransmitter release, and probably assists in neuronal membrane maturation or the final stages of neuronal differentiation. Plays a role in synaptic vesicle docking and tethering through its association with unc-18. Through binding to unc-18 mediates the release of the neurotransmitter acetylcholine from cholinergic motor neurons, and thereby promotes locomotory behaviors. Essential for embryonic viability and development. Has a role in dauer formation and adult life span. Required for locomotion. Probably by regulating neuronal transmission downstream of lin-3 and receptor lin-23 and phospholipase plc-3 and upstream of innexin unc-7 and egl-4/PKG in ALA neurons, involved in the decrease in pharyngeal pumping during the quiescent state that precedes each larval molt. This chain is Syntaxin-1A homolog, found in Caenorhabditis elegans.